Reading from the N-terminus, the 53-residue chain is Tsetse thrombin inhibitor (53 aa).

The signal sequence occupies residues 1 to 21 (MKFFTVLFFLLSIIYLIVAAP).

In terms of tissue distribution, expressed at high levels in salivary glands and midguts of adult tsetse flies.

Its subcellular location is the secreted. Its function is as follows. Potent and specific inhibitor of human thrombin. It is also a potent inhibitor of thrombin-induced platelet aggregation. It is capable of antagonizing host hemostasis and facilitating blood feeding. The polypeptide is Tsetse thrombin inhibitor (TTI) (Glossina morsitans morsitans (Savannah tsetse fly)).